We begin with the raw amino-acid sequence, 351 residues long: GTP 3',8-cyclase (351 aa).

Residues 29-254 (RFGRVARDLR…EHGREDPSAP (226 aa)) form the Radical SAM core domain. A GTP-binding site is contributed by Arg-38. [4Fe-4S] cluster-binding residues include Cys-45 and Cys-49. Tyr-51 lines the S-adenosyl-L-methionine pocket. Position 52 (Cys-52) interacts with [4Fe-4S] cluster. Arg-89 lines the GTP pocket. Gly-93 contributes to the S-adenosyl-L-methionine binding site. GTP is bound at residue Thr-120. S-adenosyl-L-methionine is bound at residue Ser-144. Lys-181 is a GTP binding site. Met-214 is an S-adenosyl-L-methionine binding site. The [4Fe-4S] cluster site is built by Cys-278 and Cys-281. Residue 283 to 285 (RTR) coordinates GTP. [4Fe-4S] cluster is bound at residue Cys-295.

Belongs to the radical SAM superfamily. MoaA family. In terms of assembly, monomer and homodimer. Requires [4Fe-4S] cluster as cofactor.

It catalyses the reaction GTP + AH2 + S-adenosyl-L-methionine = (8S)-3',8-cyclo-7,8-dihydroguanosine 5'-triphosphate + 5'-deoxyadenosine + L-methionine + A + H(+). It participates in cofactor biosynthesis; molybdopterin biosynthesis. Catalyzes the cyclization of GTP to (8S)-3',8-cyclo-7,8-dihydroguanosine 5'-triphosphate. In Rhodococcus opacus (strain B4), this protein is GTP 3',8-cyclase.